The chain runs to 297 residues: N-acetylneuraminate lyase (297 aa).

The aceneuramate site is built by serine 47 and threonine 48. Residue tyrosine 137 is the Proton donor of the active site. Lysine 165 functions as the Schiff-base intermediate with substrate in the catalytic mechanism. Aceneuramate-binding residues include threonine 167, glycine 189, aspartate 191, glutamate 192, and serine 208.

The protein belongs to the DapA family. NanA subfamily. In terms of assembly, homotetramer.

It is found in the cytoplasm. It catalyses the reaction aceneuramate = aldehydo-N-acetyl-D-mannosamine + pyruvate. Its pathway is amino-sugar metabolism; N-acetylneuraminate degradation; D-fructose 6-phosphate from N-acetylneuraminate: step 1/5. Functionally, catalyzes the reversible aldol cleavage of N-acetylneuraminic acid (sialic acid; Neu5Ac) to form pyruvate and N-acetylmannosamine (ManNAc) via a Schiff base intermediate. This Enterobacter sp. (strain 638) protein is N-acetylneuraminate lyase.